A 234-amino-acid polypeptide reads, in one-letter code: Gem-associated protein 8 (234 aa).

The tract at residues 60–116 (LAQSPAAKGGTSPKSRSKSPSASGDACRRRSRPGKPGPQRRSTEKPARFAEDNDSES) is disordered. Low complexity predominate over residues 67–83 (KGGTSPKSRSKSPSASG). Residues 100–110 (RSTEKPARFAE) are compositionally biased toward basic and acidic residues. The stretch at 130–153 (ITDELRQYFAETEQHREELRRQHQ) forms a coiled coil.

As to quaternary structure, part of the core SMN complex that contains SMN1, GEMIN2/SIP1, DDX20/GEMIN3, GEMIN4, GEMIN5, GEMIN6, GEMIN7, GEMIN8 and STRAP/UNRIP. Part of the SMN-Sm complex that contains SMN1, GEMIN2/SIP1, DDX20/GEMIN3, GEMIN4, GEMIN5, GEMIN6, GEMIN7, GEMIN8, STRAP/UNRIP and the Sm proteins SNRPB, SNRPD1, SNRPD2, SNRPD3, SNRPE, SNRPF and SNRPG. Interacts with GEMIN6; the interaction is direct. Interacts with GEMIN7; the interaction is direct. Interacts with SMN1; the interaction is direct. Interacts with GEMIN4; the interaction is direct.

The protein resides in the nucleus. The protein localises to the gem. It localises to the cytoplasm. Its function is as follows. The SMN complex catalyzes the assembly of small nuclear ribonucleoproteins (snRNPs), the building blocks of the spliceosome, and thereby plays an important role in the splicing of cellular pre-mRNAs. Most spliceosomal snRNPs contain a common set of Sm proteins SNRPB, SNRPD1, SNRPD2, SNRPD3, SNRPE, SNRPF and SNRPG that assemble in a heptameric protein ring on the Sm site of the small nuclear RNA to form the core snRNP (Sm core). In the cytosol, the Sm proteins SNRPD1, SNRPD2, SNRPE, SNRPF and SNRPG are trapped in an inactive 6S pICln-Sm complex by the chaperone CLNS1A that controls the assembly of the core snRNP. To assemble core snRNPs, the SMN complex accepts the trapped 5Sm proteins from CLNS1A forming an intermediate. Binding of snRNA inside 5Sm triggers eviction of the SMN complex, thereby allowing binding of SNRPD3 and SNRPB to complete assembly of the core snRNP. This chain is Gem-associated protein 8 (GEMIN8), found in Bos taurus (Bovine).